Here is a 280-residue protein sequence, read N- to C-terminus: Lysosome-associated membrane glycoprotein 5 (280 aa).

An N-terminal signal peptide occupies residues 1 to 29; sequence MDLQGRGVPSIDRLRVLLMLFHTMAQIMA. The Extracellular segment spans residues 30–235; sequence EQEVENLSGL…PVDEREQLEE (206 aa). N-linked (GlcNAc...) asparagine glycans are attached at residues N35, N53, and N127. A helical membrane pass occupies residues 236 to 256; the sequence is TLPLILGLILGLVIMVTLAIY. The Cytoplasmic portion of the chain corresponds to 257–280; sequence HVHHKMTANQVQIPRDRSQYKHMG.

This sequence belongs to the LAMP family. In terms of processing, glycosylated. As to expression, expressed in plasmocytoid dendritic cells. Expressed in suprabasal skin keratinocytes and squamous cells (at protein level). Expressed in the brain and weakly in spleen and skin. Expressed in plasmocytoid dendritic cells.

It is found in the cell membrane. It localises to the cytoplasmic vesicle. The protein localises to the secretory vesicle. Its subcellular location is the synaptic vesicle membrane. The protein resides in the endoplasmic reticulum-Golgi intermediate compartment membrane. It is found in the endosome membrane. It localises to the cytoplasmic vesicle membrane. The protein localises to the cell projection. Its subcellular location is the dendrite. The protein resides in the growth cone membrane. It is found in the early endosome membrane. It localises to the recycling endosome. Its function is as follows. Plays a role in short-term synaptic plasticity in a subset of GABAergic neurons in the brain. This Homo sapiens (Human) protein is Lysosome-associated membrane glycoprotein 5 (LAMP5).